A 107-amino-acid polypeptide reads, in one-letter code: Dispanin subfamily A member 2b (107 aa).

Over 1–31 (MEYRTDQVPMSPRSVQGAPGTLPIRDHLPWS) the chain is Extracellular. Residues 32–52 (IFNLFYMNVCCLGLTAMIFSV) form a helical membrane-spanning segment. S-palmitoyl cysteine attachment occurs at residues Cys41 and Cys42. The Cytoplasmic portion of the chain corresponds to 53-77 (KSRDRKVVGDVEGARHYGSTARSLN). The helical transmembrane segment at 78 to 98 (IAATVLGILLIIILIGLAATG) threads the bilayer. The Extracellular portion of the chain corresponds to 99-107 (TIQALKYKG).

Belongs to the CD225/Dispanin family. As to expression, expressed various cell types in torpedo electric organ and muscle, especially fibroblasts, capillary endothelial cells, and axonal cuff cells.

It localises to the cell membrane. The sequence is that of Dispanin subfamily A member 2b from Torpedo marmorata (Marbled electric ray).